The following is a 307-amino-acid chain: Secondary metabolism regulator LAE1 (307 aa).

It belongs to the methyltransferase superfamily. LaeA methyltransferase family. Component of the heterotrimeric velvet complex composed of LAE1, VEL1 and VEL2; VEL1 acting as a bridging protein between LAE1 and VEL2.

It is found in the nucleus. It carries out the reaction L-methionyl-[protein] + S-adenosyl-L-methionine = S-methyl-L-methionyl-[protein] + S-adenosyl-L-homocysteine. In terms of biological role, methyltransferase that performs automethylation. No other methyl-accepting substrate has been identified yet. Component of the velvet transcription factor complex that acts as a global regulator for secondary metabolite gene expression. Controls the expression of the T-toxin gene cluster. Promotes oxidative stress tolerance and acts as a virulence factors during infection. Negatively regulate mycelial pigmentation and controls sexual development, as well as asexual development during vegetative growth. This chain is Secondary metabolism regulator LAE1, found in Cochliobolus heterostrophus (strain C5 / ATCC 48332 / race O) (Southern corn leaf blight fungus).